Consider the following 360-residue polypeptide: Protein RecA (360 aa).

An ATP-binding site is contributed by 66-73; sequence GPESSGKT. A disordered region spans residues 330 to 360; that stretch reads DAKAIEERENPEKVKQDKEVPVNKDASDEKK.

The protein belongs to the RecA family.

The protein resides in the cytoplasm. In terms of biological role, can catalyze the hydrolysis of ATP in the presence of single-stranded DNA, the ATP-dependent uptake of single-stranded DNA by duplex DNA, and the ATP-dependent hybridization of homologous single-stranded DNAs. It interacts with LexA causing its activation and leading to its autocatalytic cleavage. In Lactobacillus johnsonii (strain CNCM I-12250 / La1 / NCC 533), this protein is Protein RecA.